The primary structure comprises 476 residues: Protein DETOXIFICATION 3 (476 aa).

The next 12 membrane-spanning stretches (helical) occupy residues 35-55 (AAPM…SVMV), 66-86 (GVAL…FGLA), 117-137 (IPIC…LISL), 146-166 (VAGS…FFIP), 185-205 (LTTL…FGLG), 208-228 (GAAM…SCYV), 260-280 (AAMV…SGLL), 289-309 (VLSI…GVAA), 331-351 (VLAG…LLFT), 370-390 (VANL…TAVL), 402-422 (IGAL…GVYL), and 433-453 (LWCG…FVTA).

It belongs to the multi antimicrobial extrusion (MATE) (TC 2.A.66.1) family.

It is found in the membrane. The chain is Protein DETOXIFICATION 3 from Arabidopsis thaliana (Mouse-ear cress).